The following is a 396-amino-acid chain: 8-amino-7-oxononanoate synthase (396 aa).

Residue arginine 19 coordinates substrate. 106-107 (GY) is a pyridoxal 5'-phosphate binding site. Position 131 (histidine 131) interacts with substrate. Pyridoxal 5'-phosphate contacts are provided by serine 176, histidine 204, and threonine 233. At lysine 236 the chain carries N6-(pyridoxal phosphate)lysine. Threonine 350 provides a ligand contact to substrate.

The protein belongs to the class-II pyridoxal-phosphate-dependent aminotransferase family. BioF subfamily. Homodimer. The cofactor is pyridoxal 5'-phosphate.

It catalyses the reaction 6-carboxyhexanoyl-[ACP] + L-alanine + H(+) = (8S)-8-amino-7-oxononanoate + holo-[ACP] + CO2. The protein operates within cofactor biosynthesis; biotin biosynthesis. Catalyzes the decarboxylative condensation of pimeloyl-[acyl-carrier protein] and L-alanine to produce 8-amino-7-oxononanoate (AON), [acyl-carrier protein], and carbon dioxide. In Pseudomonas savastanoi pv. phaseolicola (strain 1448A / Race 6) (Pseudomonas syringae pv. phaseolicola (strain 1448A / Race 6)), this protein is 8-amino-7-oxononanoate synthase.